Consider the following 625-residue polypeptide: tRNA uridine 5-carboxymethylaminomethyl modification enzyme MnmG (625 aa).

11–16 contacts FAD; it reads GAGHAG. 271 to 285 contacts NAD(+); that stretch reads GPRYCPSIETKIVTF.

It belongs to the MnmG family. Homodimer. Heterotetramer of two MnmE and two MnmG subunits. Requires FAD as cofactor.

It is found in the cytoplasm. Functionally, NAD-binding protein involved in the addition of a carboxymethylaminomethyl (cmnm) group at the wobble position (U34) of certain tRNAs, forming tRNA-cmnm(5)s(2)U34. The polypeptide is tRNA uridine 5-carboxymethylaminomethyl modification enzyme MnmG (Parabacteroides distasonis (strain ATCC 8503 / DSM 20701 / CIP 104284 / JCM 5825 / NCTC 11152)).